The following is a 425-amino-acid chain: Glucan 1,3-beta-glucosidase (425 aa).

Residues 1-19 (MNLTLLLLALIFSPSLIFS) form the signal peptide. Residue Glu-219 is the Proton donor of the active site. 2 cysteine pairs are disulfide-bonded: Cys-301–Cys-423 and Cys-326–Cys-352. The Nucleophile role is filled by Glu-318.

Belongs to the glycosyl hydrolase 5 (cellulase A) family.

The protein localises to the secreted. The enzyme catalyses Successive hydrolysis of beta-D-glucose units from the non-reducing ends of (1-&gt;3)-beta-D-glucans, releasing alpha-glucose.. Functionally, beta-glucanases participate in the metabolism of beta-glucan, the main structural component of the cell wall. It could also function biosynthetically as a transglycosylase. The sequence is that of Glucan 1,3-beta-glucosidase from Schwanniomyces occidentalis (Yeast).